The following is a 179-amino-acid chain: MYHVVAATTNPAKIKAITLAFTDVFGAENCRIEGVDVDSGVPRQPLGSIETRTGARNRVMMARQVRPEADFWVGVEAGIEESMTFAWMVIENTHLRGESRSASLVLPESILHGIREGRELGDEMERLTGVQNIKHKGGAIGVFTDGKLSRTSVYHQALLLALVPFHNPIYQIPVQAAKP.

Residue 8–13 (TTNPAK) participates in substrate binding. Residues aspartate 38 and glutamate 68 each contribute to the Mg(2+) site. 68–69 (EA) is a substrate binding site.

The protein belongs to the YjjX NTPase family. In terms of assembly, homodimer. Mg(2+) serves as cofactor. Requires Mn(2+) as cofactor.

The catalysed reaction is XTP + H2O = XDP + phosphate + H(+). The enzyme catalyses ITP + H2O = IDP + phosphate + H(+). Functionally, phosphatase that hydrolyzes non-canonical purine nucleotides such as XTP and ITP to their respective diphosphate derivatives. Probably excludes non-canonical purines from DNA/RNA precursor pool, thus preventing their incorporation into DNA/RNA and avoiding chromosomal lesions. The chain is Inosine/xanthosine triphosphatase from Pectobacterium carotovorum subsp. carotovorum (strain PC1).